Here is a 91-residue protein sequence, read N- to C-terminus: Cell division topological specificity factor (91 aa).

It belongs to the MinE family.

Its function is as follows. Prevents the cell division inhibition by proteins MinC and MinD at internal division sites while permitting inhibition at polar sites. This ensures cell division at the proper site by restricting the formation of a division septum at the midpoint of the long axis of the cell. This Chloroflexus aurantiacus (strain ATCC 29366 / DSM 635 / J-10-fl) protein is Cell division topological specificity factor.